A 139-amino-acid chain; its full sequence is uncharacterized protein (139 aa).

The helical transmembrane segment at 43 to 59 (FGVISTLIAIFIGAFWL) threads the bilayer.

It localises to the membrane. This is an uncharacterized protein from Haemophilus influenzae (strain ATCC 51907 / DSM 11121 / KW20 / Rd).